The sequence spans 412 residues: NADH-ubiquinone oxidoreductase 49 kDa subunit (412 aa).

Belongs to the complex I 49 kDa subunit family.

The protein localises to the hydrogenosome. The enzyme catalyses a ubiquinone + NADH + 5 H(+)(in) = a ubiquinol + NAD(+) + 4 H(+)(out). In terms of biological role, transfer of electrons from NADH to the respiratory chain. The immediate electron acceptor for the enzyme is believed to be ubiquinone. Component of the iron-sulfur (IP) fragment of the enzyme. The polypeptide is NADH-ubiquinone oxidoreductase 49 kDa subunit (nad7) (Nyctotherus ovalis).